The primary structure comprises 363 residues: Nicotinamide adenine dinucleotide transporter 2, mitochondrial (363 aa).

Solcar repeat units lie at residues 15–107 (REVA…LKDV), 115–203 (LSIG…IKQY), and 215–305 (LSPG…MLRF). Transmembrane regions (helical) follow at residues 21–41 (AGAGATAGAIAATFVCPLDVI), 82–102 (GLSPTIIALLPNWAVYFSVYG), 121–141 (MIAAAGAGAATSIATNPLWVV), 176–196 (LYSGILPSLAGVSHVAIQFPA), 215–235 (LSPGNVAIASSIAKVIASILT), and 277–299 (LYRGCATNLLRTTPSAVITFTTY). The segment at 313–363 (ETNRSDDRRREEERKNLVSRRGEEEDKDLGLRESQTQSNKISTPHIPLGSK) is disordered. Over residues 315 to 343 (NRSDDRRREEERKNLVSRRGEEEDKDLGL) the composition is skewed to basic and acidic residues. Over residues 345–354 (ESQTQSNKIS) the composition is skewed to polar residues.

The protein belongs to the mitochondrial carrier (TC 2.A.29) family. In terms of tissue distribution, highly expressed in young meristematic shoot area, vascular bundles of leaves, developing siliques including the funiculi, petal veins, developing pollen and central cylinder of roots.

It is found in the mitochondrion membrane. Its activity is regulated as follows. Inhibited by pyridoxal 5'-phosphate, bathophenanthroline, tannic acid, mersalyl, mercuric chloride, p-hydroxymercuribenzoate, p-hydroxymercuribenzoate sulfonate, bromocresol purple and N-ethylmaleimide. Its function is as follows. Mediates the NAD(+) import into chloroplast. Favors the NAD(+)(in)/ADP or AMP(out) antiport exchange, but is also able to catalyze a low unidirectional transport (uniport) of NAD(+). Transports NAD(+), nicotinic acid adenine dinucleotide, nicotinamide mononucleotide, nicotinic acid mononucleotide, FAD, FMN, TTP, TDP, TMP, UTP, UDP, UMP, CTP, CDP, CMP, GTP, GDP, GMP, 3'-AMP, ATP, ADP and AMP, has low transport activity with cAMP, NADH and alpha-NAD(+), and has no activity with NADP(+), NADPH, nicotinamide, nicotinic acid, adenosine, thiamine mono- or diphosphate, inorganic phosphate, CoA, folate, NaCl, malate, malonate, citrate, fumarate, aspartate, glutamate, S-adenosylmethionine, lysine, arginine, and ornithine. The sequence is that of Nicotinamide adenine dinucleotide transporter 2, mitochondrial (NDT2) from Arabidopsis thaliana (Mouse-ear cress).